A 317-amino-acid chain; its full sequence is MIDRYGRPLEDLRVTLTHVCNFSCFFCHMEGEDTESMQGLSPHQIGLVSRVAVEFGVKSVKLTGGEPTLRRDLPEIIREIRTSGVRDISMTTNGFLLANIAGKLKDAGLDRINISLHALTREKFKDVTGVDGMDRVIAGIREAKNQGFKPIKLNFVLTKRNSEEAKRVIEFSEEIGIDELHLIELHPVGLGRSTFSFHQGMEELEKEIAKIAVKSEIREKHFRPRYTLPSGLVVEIVKPYANPIFCAGCNRVRLTVDGKLKTCLYRDDKVIDVMYALSNKDLTLEERLELIRHGFEAAISIREPNFKYMMKIEAQQA.

The region spanning Arg4–Arg223 is the Radical SAM core domain. Arg13 contacts GTP. Positions 20, 24, and 27 each coordinate [4Fe-4S] cluster. Lys61 serves as a coordination point for GTP. S-adenosyl-L-methionine is bound at residue Gly65. Thr91 contributes to the GTP binding site. Ser115 is an S-adenosyl-L-methionine binding site. Lys152 lines the GTP pocket. Cys246 and Cys249 together coordinate [4Fe-4S] cluster. Residue Arg251–Arg253 coordinates GTP. Residue Cys263 participates in [4Fe-4S] cluster binding.

It belongs to the radical SAM superfamily. MoaA family. [4Fe-4S] cluster is required as a cofactor.

It catalyses the reaction GTP + AH2 + S-adenosyl-L-methionine = (8S)-3',8-cyclo-7,8-dihydroguanosine 5'-triphosphate + 5'-deoxyadenosine + L-methionine + A + H(+). It participates in cofactor biosynthesis; molybdopterin biosynthesis. Catalyzes the cyclization of GTP to (8S)-3',8-cyclo-7,8-dihydroguanosine 5'-triphosphate. This chain is Probable GTP 3',8-cyclase, found in Metallosphaera sedula (strain ATCC 51363 / DSM 5348 / JCM 9185 / NBRC 15509 / TH2).